Consider the following 98-residue polypeptide: NADH-ubiquinone oxidoreductase chain 4L (98 aa).

Transmembrane regions (helical) follow at residues 1–21, 29–49, and 61–81; these read MTLI…GLLM, ALLC…LTIL, and IILL…LVMV.

Belongs to the complex I subunit 4L family. In terms of assembly, core subunit of respiratory chain NADH dehydrogenase (Complex I) which is composed of 45 different subunits.

The protein resides in the mitochondrion inner membrane. The catalysed reaction is a ubiquinone + NADH + 5 H(+)(in) = a ubiquinol + NAD(+) + 4 H(+)(out). Core subunit of the mitochondrial membrane respiratory chain NADH dehydrogenase (Complex I) which catalyzes electron transfer from NADH through the respiratory chain, using ubiquinone as an electron acceptor. Part of the enzyme membrane arm which is embedded in the lipid bilayer and involved in proton translocation. This Balaenoptera bonaerensis (Antarctic minke whale) protein is NADH-ubiquinone oxidoreductase chain 4L (MT-ND4L).